Reading from the N-terminus, the 133-residue chain is Profilin-1 (133 aa).

Cys95 and Cys117 are disulfide-bonded.

This sequence belongs to the profilin family. As to quaternary structure, dimer and tetramer. Occurs in many kinds of cells as a complex with monomeric actin in a 1:1 ratio.

The protein resides in the cytoplasm. It localises to the cytoskeleton. Functionally, binds to actin and affects the structure of the cytoskeleton. At high concentrations, profilin prevents the polymerization of actin, whereas it enhances it at low concentrations. By binding to PIP2, it inhibits the formation of IP3 and DG. Possesses high binding affinity for poly(L-proline). This is Profilin-1 from Artemisia vulgaris (Mugwort).